A 185-amino-acid chain; its full sequence is Jasmonate-induced protein homolog (185 aa).

The protein belongs to the jasmonate-induced protein family.

This is Jasmonate-induced protein homolog from Atriplex canescens (Fourwing saltbush).